Consider the following 619-residue polypeptide: MFYHLIAPLKNKTPPLTYFSKEQHQKGALVNIPLRNKTLLGVVLEEVSKPSFECLELEKTPYFLLPFQMELAIFIAQYYSANLSSVLSLFAPFKECDLVGLEKIEPILNILSQTQTNALKELQKHSASLLFGDTGSGKTEIYMHAIAQTLEQKKSALLLVPEIALTPQMQQRLKRVFKENLGLWHSKLSQNQKKQFLEKLYSQEIKLVVGTRSALFLPLKELGLIIVDEEHDFSYKSHQSPMYNARDLCLYLSHKFPIQVILGSATPSLNSYKRFKDKALVRLKGRYTPTQKNIIFEKTERFITPKLLEALQQVLDKNEQAIIFVPTRANFKTLLCQSCYKSVQCPFCSVNMSLHLKTNKLMCHYCHFSSPIPKICSACQSEVLVGKRIGTMQVLKELESLLEGAKIAILDKDHTSTQKKLHNILNDFNAQKTNILIGTQMISKGHDYAKVSLAVVLGIDNIIKSNSYRALEEGVSLLYQIAGRSARQISGQVFIQSTETDLLENFLEDYEDFLQYELQERCELYPPFSRLCLLEFKHKNEEKAQQLSLKASQTLSSCLEKGVTLSNFKAPIEKIASSYRYLILLRSKNPLSLIKSVHAFLKSAPSIPCSVNMDPVDIF.

In terms of domain architecture, Helicase ATP-binding spans 119–285; the sequence is LKELQKHSAS…KDKALVRLKG (167 aa). An ATP-binding site is contributed by 132–139; that stretch reads GDTGSGKT. Residues 228-231 carry the DEAH box motif; the sequence is DEEH. Zn(2+) contacts are provided by Cys336, Cys339, Cys345, Cys348, Cys363, Cys366, Cys376, and Cys379. Residues 371-532 form the Helicase C-terminal domain; that stretch reads PIPKICSACQ…ELYPPFSRLC (162 aa).

It belongs to the helicase family. PriA subfamily. In terms of assembly, component of the replication restart primosome. It depends on Zn(2+) as a cofactor.

The catalysed reaction is Couples ATP hydrolysis with the unwinding of duplex DNA by translocating in the 3'-5' direction.. It carries out the reaction ATP + H2O = ADP + phosphate + H(+). Functionally, initiates the restart of stalled replication forks, which reloads the replicative helicase on sites other than the origin of replication. Recognizes and binds to abandoned replication forks and remodels them to uncover a helicase loading site. Promotes assembly of the primosome at these replication forks. In terms of biological role, important for survival of the bacteria in host cells. The polypeptide is Replication restart protein PriA (Helicobacter pylori (strain ATCC 700392 / 26695) (Campylobacter pylori)).